We begin with the raw amino-acid sequence, 102 residues long: NADH-quinone oxidoreductase subunit K (102 aa).

Transmembrane regions (helical) follow at residues 5–25, 31–51, and 66–86; these read ITHY…GIFL, IIIL…FVAF, and FVLT…VVFF.

It belongs to the complex I subunit 4L family. NDH-1 is composed of 14 different subunits. Subunits NuoA, H, J, K, L, M, N constitute the membrane sector of the complex.

The protein resides in the cell inner membrane. The catalysed reaction is a quinone + NADH + 5 H(+)(in) = a quinol + NAD(+) + 4 H(+)(out). In terms of biological role, NDH-1 shuttles electrons from NADH, via FMN and iron-sulfur (Fe-S) centers, to quinones in the respiratory chain. The immediate electron acceptor for the enzyme in this species is believed to be ubiquinone. Couples the redox reaction to proton translocation (for every two electrons transferred, four hydrogen ions are translocated across the cytoplasmic membrane), and thus conserves the redox energy in a proton gradient. The polypeptide is NADH-quinone oxidoreductase subunit K (Bartonella tribocorum (strain CIP 105476 / IBS 506)).